An 87-amino-acid chain; its full sequence is Small ribosomal subunit protein eS21 (87 aa).

It belongs to the eukaryotic ribosomal protein eS21 family. Component of the small ribosomal subunit. Mature ribosomes consist of a small (40S) and a large (60S) subunit. The 40S subunit contains about 33 different proteins and 1 molecule of RNA (18S). The 60S subunit contains about 49 different proteins and 3 molecules of RNA (25S, 5.8S and 5S).

The protein resides in the cytoplasm. Its function is as follows. Required for the processing of the 20S rRNA-precursor to mature 18S rRNA in a late step of the maturation of 40S ribosomal subunits. Has a physiological role leading to 18S rRNA stability. This Eremothecium gossypii (strain ATCC 10895 / CBS 109.51 / FGSC 9923 / NRRL Y-1056) (Yeast) protein is Small ribosomal subunit protein eS21 (RPS21).